The primary structure comprises 338 residues: Ketoreductase azaE (338 aa).

The NADP(+) site is built by Lys41 and Tyr166.

Belongs to the NAD(P)-dependent epimerase/dehydratase family. Dihydroflavonol-4-reductase subfamily.

The protein operates within secondary metabolite biosynthesis. In terms of biological role, ketoreductase; part of the gene cluster that mediates the biosynthesis of azaphilones, a class of fungal metabolites characterized by a highly oxygenated pyrano-quinone bicyclic core and exhibiting a broad range of bioactivities. In the first step, the non-reducing polyketide synthase azaA forms the hexaketide precursor from successive condensations of five malonyl-CoA units, presumably with a simple acetyl-CoA starter unit. The reactive polyketide chain then undergoes a PT-mediated C2-C7 cyclization to afford the aromatic ring and is eventually released as an aldehyde through the R-domain. The putative ketoreductase azaE is proposed to catalyze the reduction of the terminal ketone resulting in the early culture product FK17-P2a. The monooxygenase azaH was demonstrated to be the only enzyme required to convert FK17-P2a to azanigerone E. AzaH first hydroxylates the benzaldehyde intermediate FK17-P2a at C4, which triggers the formation of the pyran-ring to afford azanigerone E. In parallel, the 2,4-dimethylhexanoyl chain is synthesized by the HR-PKS azaB and is proposed to be transferred to the C4-hydroxyl of azanigerone E by the acyltransferase azaD directly from the ACP domain of azaB. Alternatively, the 2,4-dimethyl-hexanoyl chain may be offloaded from the HR-PKS as a carboxylic acid and converted to an acyl-CoA by azaF. The resulting acyl-CoA molecule could then be taken up as a substrate by AzaD to form azanigerone B. To yield the carboxylic acid substituent in azanigerone A, the hydroxypropyl side chain of azanigerone B would need to undergo a C-C oxidative cleavage catalyzed by cytochrome P450 AzaI. AzaI is proposed to act on a vicinal diol that leads to a C-C bond scission either through an alkoxyradical intermediate or a peroxy complex. In the biosynthesis of azanigerone A, azanigerone B first undergoes hydroxylation at C10, possibly catalyzed by one of the two FAD-dependent monooxygenases encoded in the cluster, azaG or azaL, resulting in the vicinal diol azanigerone C. Oxidative cleavage of azanigerone C by azaI would yield the corresponding aldehyde derivative of azanigerone A. Finally, the dehydrogenase azaJ is proposed to convert the aldehyde functional group into the carboxylic acid, completing the conversion from azanigerone B to azanigerone A. Alternatively, the oxidation of aldehyde to carboxylic acid may be catalyzed by the same P450 enzyme azaI via consecutive oxidation or by endogenous alcohol dehydrogenase. This chain is Ketoreductase azaE, found in Aspergillus niger (strain ATCC 1015 / CBS 113.46 / FGSC A1144 / LSHB Ac4 / NCTC 3858a / NRRL 328 / USDA 3528.7).